The following is a 438-amino-acid chain: Malic acid transport protein (438 aa).

Helical transmembrane passes span 37–57 (SWFA…SFPF), 65–85 (IGKI…SCML), 106–126 (LFIA…AIYA), 140–160 (ILYY…FFTI), 172–192 (SPAW…AGAV), 205–225 (VIFG…LFAV), 242–262 (PGMF…INIA), 288–308 (FMAI…MVSF), 321–341 (ACGW…TIEI), and 353–373 (FGHI…YLMV). The interval 390–438 (AHPPPKPNTGVLNPTFPPEKAPASLEKVDTHVTSTGGESDPPSSEHESV) is disordered. 6 positions are modified to phosphoserine: Ser413, Ser423, Ser428, Ser432, Ser433, and Ser437.

The protein belongs to the tellurite-resistance/dicarboxylate transporter (TDT) family.

It is found in the membrane. In terms of biological role, permease for malate and other C4 dicarboxylic acids. The chain is Malic acid transport protein (mae1) from Schizosaccharomyces pombe (strain 972 / ATCC 24843) (Fission yeast).